The following is a 286-amino-acid chain: Pyridoxal kinase PdxY (286 aa).

Residues Ser-9 and 44-45 (TQ) contribute to the substrate site. ATP is bound by residues Asp-111, Ala-143, Glu-148, Lys-181, and 208–211 (RPLV). Asp-223 provides a ligand contact to substrate.

This sequence belongs to the pyridoxine kinase family. PdxY subfamily. In terms of assembly, homodimer. The cofactor is Mg(2+).

The enzyme catalyses pyridoxal + ATP = pyridoxal 5'-phosphate + ADP + H(+). It participates in cofactor metabolism; pyridoxal 5'-phosphate salvage; pyridoxal 5'-phosphate from pyridoxal: step 1/1. Its function is as follows. Pyridoxal kinase involved in the salvage pathway of pyridoxal 5'-phosphate (PLP). Catalyzes the phosphorylation of pyridoxal to PLP. The chain is Pyridoxal kinase PdxY from Salmonella paratyphi A (strain ATCC 9150 / SARB42).